A 112-amino-acid polypeptide reads, in one-letter code: uncharacterized protein (112 aa).

The segment at 90 to 112 (KNFNNSKNDQIKKKKIDNNQVNL) is disordered.

This is an uncharacterized protein from Buchnera aphidicola subsp. Acyrthosiphon pisum (strain APS) (Acyrthosiphon pisum symbiotic bacterium).